The sequence spans 362 residues: G-protein coupled receptor 4 (362 aa).

Over 1–8 (MGNRTLEG) the chain is Extracellular. N-linked (GlcNAc...) asparagine glycosylation is present at asparagine 3. Residues 9–45 (CHVDSRMDHLFPPSLYIFVIGVGLPTNCLALWAAYRQ) traverse the membrane as a helical segment. 2 cysteine pairs are disulfide-bonded: cysteine 9–cysteine 258 and cysteine 90–cysteine 168. Topologically, residues 46-49 (VRQR) are cytoplasmic. Residues 50 to 80 (NELGVYLMNLSIADLLYICTLPLWVDYFLHH) traverse the membrane as a helical segment. The Extracellular portion of the chain corresponds to 81–85 (DNWIH). A helical membrane pass occupies residues 86 to 121 (GPGSCKLFGFIFYTNIYISIAFLCCISVDRYLAVAH). Residues 122-129 (PLRFARLR) are Cytoplasmic-facing. The helical transmembrane segment at 130–156 (RVKTAVAVSSVVWATELGANSAPLFHD) threads the bilayer. Topologically, residues 157-172 (ELFRDRYNHTFCFEKF) are extracellular. Positions 157-172 (ELFRDRYNHTFCFEKF) are extracellular loop 2 (ECL2). N-linked (GlcNAc...) asparagine glycosylation is present at asparagine 164. Residues 173–210 (PMEGWVAWMNLYRVFVGFLFPWALMLLSYRGILRAVRG) traverse the membrane as a helical segment. Residues 211 to 214 (SVST) are Cytoplasmic-facing. A helical membrane pass occupies residues 215–250 (ERQEKVKIKRLALSLIAIVLVCFAPYHVLLLSRSAV). The Extracellular segment spans residues 251 to 260 (YLRRPRDCGF). Residues 261–289 (EERVFSAYHSSLAFTSLNCVADPILYCLV) form a helical membrane-spanning segment. Over 290–362 (NEGARSDVAK…VQLKMLPPAQ (73 aa)) the chain is Cytoplasmic.

Belongs to the G-protein coupled receptor 1 family.

The protein resides in the cell membrane. Activated by a network of residues that connects an extracellular-facing cavity to Glu-145, a conserved charged residue buried in the transmembrane core of the receptor. Protonation likely drives conformational changes in extracellular loop 2 (ECL2), which stabilizes movement of transmembrane 3 (TM3) and a series of rearrangements that connect the extracellular-facing cavity to Glu-145, a residue only conserved in proton-sensing G-protein coupled receptors. Proton-sensing G-protein coupled receptor activated by extracellular pH, which is required to monitor pH changes and generate adaptive reactions. Activated by an optimal pH of 6.8-7.2. Ligand binding causes a conformation change that triggers signaling via guanine nucleotide-binding proteins (G proteins) and modulates the activity of downstream effectors, such as adenylate cyclase. GPR4 is mainly coupled to G(s) G proteins and mediates activation of adenylate cyclase activity. May also couple with G(q) and G(12)/G(13) G proteins. Acts as a key regulator of respiratory sensitivity to CO2/H(+) in brain retrotrapezoid nucleus neurons: acts by mediating detection of protons generated by the formation of carbonic acid in the blood, an important mechanism to impulse to breathe. Also acts as a regulator of acid secretion in the kidney collecting duct by maintaining acid-base homeostasis in the kidney. Acidosis-induced GPR4 activation increases paracellular gap formation and permeability of vascular endothelial cells, possibly through the G(12)/G(13)/Rho GTPase signaling pathway. The polypeptide is G-protein coupled receptor 4 (GPR4) (Bos taurus (Bovine)).